A 284-amino-acid polypeptide reads, in one-letter code: Elongation factor Ts (284 aa).

The tract at residues 80–83 (TDFV) is involved in Mg(2+) ion dislocation from EF-Tu.

Belongs to the EF-Ts family.

It is found in the cytoplasm. In terms of biological role, associates with the EF-Tu.GDP complex and induces the exchange of GDP to GTP. It remains bound to the aminoacyl-tRNA.EF-Tu.GTP complex up to the GTP hydrolysis stage on the ribosome. The protein is Elongation factor Ts of Neisseria meningitidis serogroup C (strain 053442).